We begin with the raw amino-acid sequence, 156 residues long: Small ribosomal subunit protein uS7 (156 aa).

It belongs to the universal ribosomal protein uS7 family. As to quaternary structure, part of the 30S ribosomal subunit. Contacts proteins S9 and S11.

One of the primary rRNA binding proteins, it binds directly to 16S rRNA where it nucleates assembly of the head domain of the 30S subunit. Is located at the subunit interface close to the decoding center, probably blocks exit of the E-site tRNA. This Thiomonas delicata (Thiomonas cuprina) protein is Small ribosomal subunit protein uS7.